We begin with the raw amino-acid sequence, 497 residues long: Vacuolar fusion protein CCZ1 homolog B (497 aa).

A disordered region spans residues 244-284 (GTSSWSYLRKGSGSPQISSRSTTVPPLGSGGTLPSGNGSST).

The protein belongs to the CCZ1 family. Interacts with MON1.

The protein resides in the endosome. The protein localises to the prevacuolar compartment. In terms of biological role, plays an important role in membrane trafficking through the secretory apparatus. In complex with MON1, acts as a guanine exchange factor (GEF) for RABG3F of the RAB7 protein family. Promotes the exchange of GDP to GTP, converting RABG3F from an inactive GDP-bound form into an active GTP-bound form. The RABG3F active form is involved in protein trafficking from prevacuolar compartments (PVCs) to vacuoles. May serve as a linker between Rab5 and Rab7 protein families in PVCs and mediate PVC maturation. The polypeptide is Vacuolar fusion protein CCZ1 homolog B (Arabidopsis thaliana (Mouse-ear cress)).